The following is a 682-amino-acid chain: Protein SYG1 homolog (682 aa).

The SPX domain occupies 1–219 (MKFGKVIEGQ…HTDLQGFWVD (219 aa)). Over 1-274 (MKFGKVIEGQ…KEHFSANSMR (274 aa)) the chain is Cytoplasmic. Residues 275 to 295 (FGLLFGAGLPLAIEAACYYNA) traverse the membrane as a helical segment. Residues 296–300 (TEQSS) lie on the Extracellular side of the membrane. Residues 301–321 (YLLQIWGGFFLVIFAFVLFDL) traverse the membrane as a helical segment. At 322-348 (DCYVWEKTRVNYMLIFEFNQRKSLNWR) the chain is on the cytoplasmic side. A helical transmembrane segment spans residues 349–369 (QHLEIVGAVFFIFSLFFFLCM). Residues 370–377 (RNFFPGFT) are Extracellular-facing. A helical membrane pass occupies residues 378–398 (IYFPALFLGVVGTFLIAPVIV). Over 399–406 (PYWRMRRY) the chain is Cytoplasmic. The helical transmembrane segment at 407–424 (LIIQLIRVFLSGLSTVHF) threads the bilayer. The Extracellular portion of the chain corresponds to 425–426 (QD). Residues 427–447 (FFFADQMVSLTYACGNISLFF) traverse the membrane as a helical segment. Residues 448-525 (CLYKRLWRQP…WRIHPGLKYR (78 aa)) are Cytoplasmic-facing. The EXS domain maps to 459 to 654 (LCNSSHSPLL…VKPHSDVFVS (196 aa)). A helical membrane pass occupies residues 526–546 (VLYTIFAGVNSLFSYTWDILM). Residues 547–571 (DWNLLVRKDGRWQFREHRILKQLWP) are Extracellular-facing. Residues 572 to 592 (YIIAMILNFIVRSSFIFYCIF) form a helical membrane-spanning segment. Over 593–682 (PNHIQHSSGI…QTDVDEAQFS (90 aa)) the chain is Cytoplasmic. Positions 659–682 (SDKNYTDDEDSMDDQTDVDEAQFS) are disordered. The segment covering 665–682 (DDEDSMDDQTDVDEAQFS) has biased composition (acidic residues).

It belongs to the SYG1 (TC 2.A.94) family.

Its subcellular location is the cell membrane. In terms of biological role, may function in G-protein coupled signal transduction. This chain is Protein SYG1 homolog, found in Schizosaccharomyces pombe (strain 972 / ATCC 24843) (Fission yeast).